Reading from the N-terminus, the 95-residue chain is Hiracin-JM79 immunity factor (95 aa).

Functionally, imparts immunity to bacteriocin hiracin-JM79 to naturally sensitive host strains. This chain is Hiracin-JM79 immunity factor, found in Enterococcus hirae.